We begin with the raw amino-acid sequence, 387 residues long: tRNA N6-adenosine threonylcarbamoyltransferase (387 aa).

Residues H112 and H116 each coordinate Fe cation. Substrate is bound by residues 134–138 (LASGG), D167, G180, and N325. D353 is a binding site for Fe cation.

Belongs to the KAE1 / TsaD family. Fe(2+) is required as a cofactor.

It localises to the cytoplasm. It catalyses the reaction L-threonylcarbamoyladenylate + adenosine(37) in tRNA = N(6)-L-threonylcarbamoyladenosine(37) in tRNA + AMP + H(+). In terms of biological role, required for the formation of a threonylcarbamoyl group on adenosine at position 37 (t(6)A37) in tRNAs that read codons beginning with adenine. Is involved in the transfer of the threonylcarbamoyl moiety of threonylcarbamoyl-AMP (TC-AMP) to the N6 group of A37, together with TsaE and TsaB. TsaD likely plays a direct catalytic role in this reaction. In Rickettsia prowazekii (strain Madrid E), this protein is tRNA N6-adenosine threonylcarbamoyltransferase.